The sequence spans 213 residues: Major fimbrial subunit (213 aa).

Residues 1–20 (MKKTLLGSLILLAFAGNVQA) form the signal peptide. Cys-41 and Cys-81 are joined by a disulfide.

The protein belongs to the fimbrial protein family.

Its subcellular location is the fimbrium. Its function is as follows. Mediates adherence to oropharyngeal epithelial cells. Helps the airway colonization process. The sequence is that of Major fimbrial subunit (hifA) from Haemophilus influenzae.